Here is a 334-residue protein sequence, read N- to C-terminus: D-alanine--D-alanine ligase (334 aa).

The 205-residue stretch at 111-315 (KRVCLSHGVP…YEDLCIEILR (205 aa)) folds into the ATP-grasp domain. Position 141–196 (141–196 (AAEFGLPLMLKAPHEGSTIGIAKVETAEGMQAGFDLCAKYEAVVLVEQFVKGRELT)) interacts with ATP. Mg(2+) contacts are provided by aspartate 268, glutamate 282, and asparagine 284.

The protein belongs to the D-alanine--D-alanine ligase family. The cofactor is Mg(2+). Mn(2+) is required as a cofactor.

The protein localises to the cytoplasm. It catalyses the reaction 2 D-alanine + ATP = D-alanyl-D-alanine + ADP + phosphate + H(+). It participates in cell wall biogenesis; peptidoglycan biosynthesis. In terms of biological role, cell wall formation. This is D-alanine--D-alanine ligase from Herminiimonas arsenicoxydans.